Consider the following 194-residue polypeptide: Archaetidylinositol phosphate synthase (194 aa).

A run of 2 helical transmembrane segments spans residues 32-51 (IYTLASPVAAAAALPAWLYI) and 58-78 (LLIALSLLLDAVDGAVARFTG). Residues aspartate 67, aspartate 70, aspartate 88, and aspartate 92 each contribute to the Mg(2+) site. Aspartate 92 (proton acceptor) is an active-site residue. 3 helical membrane passes run 103 to 123 (LYIAGVHPLIVIAMLSGGLIV), 150 to 170 (IAILAILAISIYNLQTALALA), and 172 to 192 (AAAVLVWITVIQRMVYIAGEL).

This sequence belongs to the CDP-alcohol phosphatidyltransferase class-I family. Mn(2+) is required as a cofactor. Requires Mg(2+) as cofactor.

The protein resides in the cell membrane. It carries out the reaction CDP-2,3-bis-O-(phytanyl)-sn-glycerol + 1D-myo-inositol 3-phosphate = saturated 1-archaetidyl-1D-myo-inositol 3-phosphate + CMP + H(+). It participates in lipid metabolism; phospholipid metabolism. In terms of biological role, catalyzes the formation of archaetidylinositol phosphate (AIP) from CDP-archaeol (CDP-ArOH or CDP-2,3-bis-(O-phytanyl)-sn-glycerol) and 1L-myo-inositol 1-phosphate (IP or 1D-myo-inositol 3-phosphate). AIP is a precursor of archaetidyl-myo-inositol (AI), an ether-type inositol phospholipid ubiquitously distributed in archaea membranes and essential for glycolipid biosynthesis in archaea. The polypeptide is Archaetidylinositol phosphate synthase (Aeropyrum pernix (strain ATCC 700893 / DSM 11879 / JCM 9820 / NBRC 100138 / K1)).